A 480-amino-acid chain; its full sequence is Protein nucleotidyltransferase YdiU (480 aa).

Residues glycine 86, glycine 88, arginine 89, lysine 109, aspartate 121, glycine 122, arginine 172, and arginine 179 each contribute to the ATP site. Aspartate 248 acts as the Proton acceptor in catalysis. Residues asparagine 249 and aspartate 258 each contribute to the Mg(2+) site. Aspartate 258 contributes to the ATP binding site.

The protein belongs to the SELO family. Mg(2+) serves as cofactor. The cofactor is Mn(2+).

It carries out the reaction L-seryl-[protein] + ATP = 3-O-(5'-adenylyl)-L-seryl-[protein] + diphosphate. The enzyme catalyses L-threonyl-[protein] + ATP = 3-O-(5'-adenylyl)-L-threonyl-[protein] + diphosphate. It catalyses the reaction L-tyrosyl-[protein] + ATP = O-(5'-adenylyl)-L-tyrosyl-[protein] + diphosphate. The catalysed reaction is L-histidyl-[protein] + UTP = N(tele)-(5'-uridylyl)-L-histidyl-[protein] + diphosphate. It carries out the reaction L-seryl-[protein] + UTP = O-(5'-uridylyl)-L-seryl-[protein] + diphosphate. The enzyme catalyses L-tyrosyl-[protein] + UTP = O-(5'-uridylyl)-L-tyrosyl-[protein] + diphosphate. Its function is as follows. Nucleotidyltransferase involved in the post-translational modification of proteins. It can catalyze the addition of adenosine monophosphate (AMP) or uridine monophosphate (UMP) to a protein, resulting in modifications known as AMPylation and UMPylation. The sequence is that of Protein nucleotidyltransferase YdiU from Salmonella paratyphi B (strain ATCC BAA-1250 / SPB7).